A 456-amino-acid polypeptide reads, in one-letter code: Phospholipase A1 member A (456 aa).

The first 25 residues, 1–25 (MRPGLWETCFWLWGPLLWLSIGSSG), serve as a signal peptide directing secretion. Serine 166 (nucleophile) is an active-site residue. Aspartate 190 functions as the Charge relay system in the catalytic mechanism. A disulfide bridge connects residues cysteine 245 and cysteine 258. Histidine 260 acts as the Charge relay system in catalysis. 2 disulfide bridges follow: cysteine 282-cysteine 293 and cysteine 296-cysteine 304. Asparagine 365 carries N-linked (GlcNAc...) asparagine glycosylation.

The protein belongs to the AB hydrolase superfamily. Lipase family.

It localises to the secreted. The catalysed reaction is a 1,2-diacyl-sn-glycero-3-phospho-L-serine + H2O = a 2-acyl-sn-glycero-3-phospho-L-serine + a fatty acid + H(+). The enzyme catalyses 1,2-di-(9Z)-octadecenoyl-sn-glycero-3-phospho-L-serine + H2O = 2-(9Z-octadecenoyl)-sn-glycero-3-phospho-L-serine + (9Z)-octadecenoate + H(+). It catalyses the reaction 1-hexadecanoyl-2-(5Z,8Z,11Z,14Z-eicosatetraenoyl)-sn-glycero-3-phospho-L-serine + H2O = 2-(5Z,8Z,11Z,14Z)-eicosatetraenoyl-sn-glycero-3-phospho-L-serine + hexadecanoate + H(+). It carries out the reaction a 1-acyl-sn-glycero-3-phospho-L-serine + H2O = sn-glycero-3-phospho-L-serine + a fatty acid + H(+). The catalysed reaction is 1-(9Z-octadecenoyl)-sn-glycero-3-phospho-L-serine + H2O = sn-glycero-3-phospho-L-serine + (9Z)-octadecenoate + H(+). Functionally, hydrolyzes the ester bond of the acyl group attached at the sn-1 position of phosphatidylserines (phospholipase A1 activity) and 1-acyl-2-lysophosphatidylserines (lysophospholipase activity) in the pathway of phosphatidylserines acyl chain remodeling. Cleaves phosphatidylserines exposed on the outer leaflet of the plasma membrane of apoptotic cells producing 2-acyl-1-lysophosphatidylserines, which in turn enhance mast cell activation and histamine production. Has no activity toward other glycerophospholipids including phosphatidylcholines, phosphatidylethanolamines, phosphatidic acids or phosphatidylinositols, or glycerolipids such as triolein. The sequence is that of Phospholipase A1 member A from Mus musculus (Mouse).